The following is a 346-amino-acid chain: Tubulin-specific chaperone C (346 aa).

Met1 carries the post-translational modification N-acetylmethionine. Residues 1–26 form a disordered region; that stretch reads MESVSCSAAAVRTGDMESQRDLSLVP. Phosphoserine occurs at positions 80 and 168. Positions 140–171 are disordered; sequence KTRGKDAASSTKVDAAPGIPPAVESIQDSPLP. A C-CAP/cofactor C-like domain is found at 171–323; the sequence is PKKAEGDLGP…NWNDVDDFNW (153 aa).

This sequence belongs to the TBCC family. Supercomplex made of cofactors A to E. Cofactors A and D function by capturing and stabilizing tubulin in a quasi-native conformation. Cofactor E binds to the cofactor D-tubulin complex; interaction with cofactor C then causes the release of tubulin polypeptides that are committed to the native state. Expressed in the retina. Expressed in the rod and cone photoreceptors, extending from the inner segments (IS), through the outer nuclear layer (ONL) and into the synapses in the outer plexiform layer (OPL). Strongly expressed to the photoreceptor connecting cilium at the tips of the IS (at protein level).

The protein localises to the cytoplasm. In terms of biological role, tubulin-folding protein; involved in the final step of the tubulin folding pathway. In Homo sapiens (Human), this protein is Tubulin-specific chaperone C (TBCC).